The primary structure comprises 294 residues: N-acetylmuramic acid 6-phosphate etherase (294 aa).

An SIS domain is found at 54 to 217 (VIQSFEEEGR…STASMIGVGK (164 aa)). Glu-82 serves as the catalytic Proton donor. Glu-113 is an active-site residue.

This sequence belongs to the GCKR-like family. MurNAc-6-P etherase subfamily. In terms of assembly, homodimer.

The catalysed reaction is N-acetyl-D-muramate 6-phosphate + H2O = N-acetyl-D-glucosamine 6-phosphate + (R)-lactate. The protein operates within amino-sugar metabolism; N-acetylmuramate degradation. Specifically catalyzes the cleavage of the D-lactyl ether substituent of MurNAc 6-phosphate, producing GlcNAc 6-phosphate and D-lactate. The protein is N-acetylmuramic acid 6-phosphate etherase of Bacillus cereus (strain ZK / E33L).